We begin with the raw amino-acid sequence, 88 residues long: UPF0250 protein Sama_2593 (88 aa).

The protein belongs to the UPF0250 family.

The polypeptide is UPF0250 protein Sama_2593 (Shewanella amazonensis (strain ATCC BAA-1098 / SB2B)).